The sequence spans 405 residues: Envelope glycoprotein M (405 aa).

The Intravirion segment spans residues Met-1–Thr-17. Residues Leu-18–Pro-38 form a helical membrane-spanning segment. At Asn-39 to Glu-76 the chain is on the virion surface side. A helical membrane pass occupies residues Met-77–Cys-97. The Intravirion portion of the chain corresponds to Gly-98 to Ala-121. A helical membrane pass occupies residues Val-122 to Ile-142. Over Gln-143–His-149 the chain is Virion surface. The helical transmembrane segment at Val-150–Ala-170 threads the bilayer. Residues Cys-171–Thr-192 are Intravirion-facing. A helical membrane pass occupies residues Phe-193 to Leu-215. Over Glu-216–Asn-245 the chain is Virion surface. Residues Leu-246 to Leu-266 traverse the membrane as a helical segment. A topological domain (intravirion) is located at residue Arg-267. Residues His-268–Val-288 form a helical membrane-spanning segment. Residues Arg-289–Leu-299 are Virion surface-facing. The helical transmembrane segment at His-300–Ile-320 threads the bilayer. Topologically, residues Arg-321–Pro-405 are intravirion. A disordered region spans residues Leu-346–Pro-405. Positions Gln-386–Thr-397 are enriched in polar residues.

The protein belongs to the herpesviridae glycoprotein M family. In terms of assembly, interacts (via N-terminus) with gN (via N-terminus). The gM-gN heterodimer forms the gCII complex.

The protein localises to the virion membrane. Its subcellular location is the host Golgi apparatus. The protein resides in the host trans-Golgi network. It is found in the host endosome membrane. It localises to the host nucleus inner membrane. Functionally, envelope glycoprotein important for virion assembly and egress. Plays a role in the correct incorporation of gH-gL into virion membrane. Directs the glycoprotein N (gN) to the host trans-Golgi network. This Homo sapiens (Human) protein is Envelope glycoprotein M.